The following is a 439-amino-acid chain: Thymidine phosphorylase (439 aa).

The protein belongs to the thymidine/pyrimidine-nucleoside phosphorylase family. In terms of assembly, homodimer.

It catalyses the reaction thymidine + phosphate = 2-deoxy-alpha-D-ribose 1-phosphate + thymine. It participates in pyrimidine metabolism; dTMP biosynthesis via salvage pathway; dTMP from thymine: step 1/2. Its function is as follows. The enzymes which catalyze the reversible phosphorolysis of pyrimidine nucleosides are involved in the degradation of these compounds and in their utilization as carbon and energy sources, or in the rescue of pyrimidine bases for nucleotide synthesis. The sequence is that of Thymidine phosphorylase from Mesorhizobium japonicum (strain LMG 29417 / CECT 9101 / MAFF 303099) (Mesorhizobium loti (strain MAFF 303099)).